Consider the following 91-residue polypeptide: Non-specific lipid-transfer protein P3 (91 aa).

4 cysteine pairs are disulfide-bonded: cysteine 3–cysteine 50, cysteine 13–cysteine 27, cysteine 28–cysteine 73, and cysteine 48–cysteine 87.

It is found in the secreted. Its function is as follows. Plant non-specific lipid-transfer proteins transfer phospholipids as well as galactolipids across membranes. May play a role in wax or cutin deposition in the cell walls of expanding epidermal cells and certain secretory tissues. This chain is Non-specific lipid-transfer protein P3, found in Vitis sp. (Grape).